Here is a 432-residue protein sequence, read N- to C-terminus: Adenylosuccinate synthetase (432 aa).

Residues 13–19 (GDEGKGK) and 41–43 (GHT) each bind GTP. Catalysis depends on Asp14, which acts as the Proton acceptor. The Mg(2+) site is built by Asp14 and Gly41. Residues 14–17 (DEGK), 39–42 (NAGH), Thr130, Arg144, Gln225, Thr240, and Arg304 contribute to the IMP site. His42 serves as the catalytic Proton donor. 300–306 (ATTGRRR) provides a ligand contact to substrate. GTP-binding positions include Arg306, 332–334 (KLD), and 415–417 (STG).

Belongs to the adenylosuccinate synthetase family. Homodimer. It depends on Mg(2+) as a cofactor.

Its subcellular location is the cytoplasm. The enzyme catalyses IMP + L-aspartate + GTP = N(6)-(1,2-dicarboxyethyl)-AMP + GDP + phosphate + 2 H(+). The protein operates within purine metabolism; AMP biosynthesis via de novo pathway; AMP from IMP: step 1/2. Functionally, plays an important role in the de novo pathway of purine nucleotide biosynthesis. Catalyzes the first committed step in the biosynthesis of AMP from IMP. The polypeptide is Adenylosuccinate synthetase (Salmonella arizonae (strain ATCC BAA-731 / CDC346-86 / RSK2980)).